The chain runs to 355 residues: Peptide chain release factor 1 (355 aa).

Q233 is subject to N5-methylglutamine.

This sequence belongs to the prokaryotic/mitochondrial release factor family. Post-translationally, methylated by PrmC. Methylation increases the termination efficiency of RF1.

It is found in the cytoplasm. Functionally, peptide chain release factor 1 directs the termination of translation in response to the peptide chain termination codons UAG and UAA. This Syntrophomonas wolfei subsp. wolfei (strain DSM 2245B / Goettingen) protein is Peptide chain release factor 1.